Consider the following 562-residue polypeptide: Adenylate kinase isoenzyme 5 (562 aa).

Adenylate kinase stretches follow at residues 133–316 (KIIL…MAVD) and 377–559 (KIIF…TAID). 142–147 (GSGKGT) contacts ATP. Residues 162-193 (SVGELLRKKIHSTSSNRKWSLIAKIITTGELA) are NMP 1. AMP-binding positions include Arg-168, 191–193 (ELA), 219–222 (GFPR), and Gln-226. The LID 1 stretch occupies residues 256-266 (KRAEQQGRPDD). Arg-257 provides a ligand contact to ATP. AMP contacts are provided by Arg-263 and Arg-274. An ATP-binding site is contributed by 386-391 (GSGKGT). The NMP 2 stretch occupies residues 406-435 (STGELLREELASESERSKLIRDIMERGDLV). AMP contacts are provided by residues Thr-407, Arg-412, 433–435 (DLV), 462–465 (GYPR), and Gln-469. An LID 2 region spans residues 499-509 (QRSRSSLPVDD). Residue Arg-500 participates in ATP binding. Residue Arg-517 coordinates AMP. Gly-545 is a binding site for ATP.

It belongs to the adenylate kinase family. Monomer. Interacts with YWHAZ. Brain specific.

The protein resides in the cytoplasm. The catalysed reaction is AMP + ATP = 2 ADP. It catalyses the reaction a 2'-deoxyribonucleoside 5'-diphosphate + ATP = a 2'-deoxyribonucleoside 5'-triphosphate + ADP. The enzyme catalyses a ribonucleoside 5'-diphosphate + ATP = a ribonucleoside 5'-triphosphate + ADP. Its function is as follows. Nucleoside monophosphate (NMP) kinase that catalyzes the reversible transfer of the terminal phosphate group between nucleoside triphosphates and monophosphates. Active on AMP and dAMP with ATP as a donor. When GTP is used as phosphate donor, the enzyme phosphorylates AMP, CMP, and to a small extent dCMP. Also displays broad nucleoside diphosphate kinase activity. This Homo sapiens (Human) protein is Adenylate kinase isoenzyme 5 (AK5).